Here is a 72-residue protein sequence, read N- to C-terminus: Large ribosomal subunit protein bL28 (72 aa).

Belongs to the bacterial ribosomal protein bL28 family.

The protein is Large ribosomal subunit protein bL28 of Chlorobium luteolum (strain DSM 273 / BCRC 81028 / 2530) (Pelodictyon luteolum).